We begin with the raw amino-acid sequence, 30 residues long: Cysteine-rich venom protein hematin (30 aa).

The protein belongs to the CRISP family. Contains 8 disulfide bonds. Expressed by the venom gland.

Its subcellular location is the secreted. Functionally, inhibits calcium-activated potassium channels (KCa), voltage-gated potassium channel (Kv), and the calcium release channel/ryanodine receptor (RyR). The protein is Cysteine-rich venom protein hematin of Hemachatus haemachatus (Rinkhals).